We begin with the raw amino-acid sequence, 313 residues long: Olfactory receptor 4Q3 (313 aa).

At 1–25 the chain is on the extracellular side; it reads MKKEQDSNVTEFVLLGLSSSWELQL. Asparagine 8 carries N-linked (GlcNAc...) asparagine glycosylation. A helical transmembrane segment spans residues 26–49; sequence FLFLLFLFFYIAIVLGNLLIVVTV. The Cytoplasmic portion of the chain corresponds to 50 to 58; that stretch reads QAHAHLLQS. A helical membrane pass occupies residues 59–80; that stretch reads PMYYFLGHLSFIDLCLSCVTVP. The Extracellular segment spans residues 81 to 101; sequence KMLGDFLQQGKSISFSGCLAQ. Cysteine 98 and cysteine 190 form a disulfide bridge. Residues 102–121 traverse the membrane as a helical segment; it reads IYFLHFLGASEMFLLTVMAY. The Cytoplasmic portion of the chain corresponds to 122 to 140; the sequence is DRYVAICNPLRYLTVMNPQ. A helical transmembrane segment spans residues 141 to 159; that stretch reads LCLWLVLACWCGGFIHSIM. At 160 to 196 the chain is on the extracellular side; sequence QVILVIQLPFCGPNELDNFYCDVPQVIKLACMDTYVV. The helical transmembrane segment at 197–220 threads the bilayer; that stretch reads EVLVIANSGLLSLVCFLVLLFSYA. Residues 221–236 are Cytoplasmic-facing; the sequence is IILITLRTHFCQGQNK. The chain crosses the membrane as a helical span at residues 237-259; sequence VFSTCASHLTVVSLIFVPCVFIY. The Extracellular segment spans residues 260–270; sequence LRPFCSFSVDK. A helical transmembrane segment spans residues 271-290; it reads IFSLFYTVITPMLNPLIYTL. Topologically, residues 291-313 are cytoplasmic; that stretch reads RNTDMKTAMKKLRIKPCGIPLPC.

Belongs to the G-protein coupled receptor 1 family.

It localises to the cell membrane. Its function is as follows. Odorant receptor. The polypeptide is Olfactory receptor 4Q3 (OR4Q3) (Homo sapiens (Human)).